A 180-amino-acid chain; its full sequence is Large ribosomal subunit protein uL5 (180 aa).

It belongs to the universal ribosomal protein uL5 family. Part of the 50S ribosomal subunit; part of the 5S rRNA/L5/L18/L25 subcomplex. Contacts the 5S rRNA and the P site tRNA. Forms a bridge to the 30S subunit in the 70S ribosome.

Its function is as follows. This is one of the proteins that bind and probably mediate the attachment of the 5S RNA into the large ribosomal subunit, where it forms part of the central protuberance. In the 70S ribosome it contacts protein S13 of the 30S subunit (bridge B1b), connecting the 2 subunits; this bridge is implicated in subunit movement. Contacts the P site tRNA; the 5S rRNA and some of its associated proteins might help stabilize positioning of ribosome-bound tRNAs. The polypeptide is Large ribosomal subunit protein uL5 (Streptococcus thermophilus (strain ATCC BAA-491 / LMD-9)).